The sequence spans 432 residues: Tyrosine--tRNA ligase (432 aa).

Positions 46–55 (PTRPDLHLGH) match the 'HIGH' region motif. Residues 232-236 (KMSKS) carry the 'KMSKS' region motif. Lysine 235 is a binding site for ATP. Positions 369-430 (IWVARLFTLA…GKDRFVRVRL (62 aa)) constitute an S4 RNA-binding domain.

It belongs to the class-I aminoacyl-tRNA synthetase family. TyrS type 2 subfamily. As to quaternary structure, homodimer.

Its subcellular location is the cytoplasm. The enzyme catalyses tRNA(Tyr) + L-tyrosine + ATP = L-tyrosyl-tRNA(Tyr) + AMP + diphosphate + H(+). Functionally, catalyzes the attachment of tyrosine to tRNA(Tyr) in a two-step reaction: tyrosine is first activated by ATP to form Tyr-AMP and then transferred to the acceptor end of tRNA(Tyr). In Thermus thermophilus (strain ATCC BAA-163 / DSM 7039 / HB27), this protein is Tyrosine--tRNA ligase.